A 137-amino-acid polypeptide reads, in one-letter code: MEQTFFIIKPDGVKRGLVGEVLKRIEQRGFTIEKLEFRSQVSEELIDQHYQDLVGQSFYPPIREFMTSGPVLVGVISGPKVIETWRTMMGATRPEEALPGTIRGDFAKAAGENEVIQNVVHGSDSEESAKREIALWF.

Residues K9, F58, R86, T92, R103, and N113 each coordinate ATP. Residue H121 is the Pros-phosphohistidine intermediate of the active site.

The protein belongs to the NDK family. Homotetramer. Mg(2+) is required as a cofactor.

It is found in the cytoplasm. The catalysed reaction is a 2'-deoxyribonucleoside 5'-diphosphate + ATP = a 2'-deoxyribonucleoside 5'-triphosphate + ADP. The enzyme catalyses a ribonucleoside 5'-diphosphate + ATP = a ribonucleoside 5'-triphosphate + ADP. Major role in the synthesis of nucleoside triphosphates other than ATP. The ATP gamma phosphate is transferred to the NDP beta phosphate via a ping-pong mechanism, using a phosphorylated active-site intermediate. This is Nucleoside diphosphate kinase from Streptococcus pneumoniae (strain P1031).